The primary structure comprises 373 residues: Glutamate 5-kinase (373 aa).

Position 15 (Lys15) interacts with ATP. 3 residues coordinate substrate: Ser55, Asp142, and Asn154. Residues 174–175 (TD) and 216–222 (TGGMVTK) each bind ATP. The region spanning 281–359 (SGKIIVDDGA…GEIEAILGYK (79 aa)) is the PUA domain.

It belongs to the glutamate 5-kinase family.

Its subcellular location is the cytoplasm. The catalysed reaction is L-glutamate + ATP = L-glutamyl 5-phosphate + ADP. The protein operates within amino-acid biosynthesis; L-proline biosynthesis; L-glutamate 5-semialdehyde from L-glutamate: step 1/2. Its function is as follows. Catalyzes the transfer of a phosphate group to glutamate to form L-glutamate 5-phosphate. The sequence is that of Glutamate 5-kinase from Geobacter sulfurreducens (strain ATCC 51573 / DSM 12127 / PCA).